Consider the following 506-residue polypeptide: MVTIRADEISNIIRERIEQYNREVTIVNTGTVLQVGDGIARIYGLDEVMAGELVEFEEGTIGIALNLESNNVGVVLMGDGLMIQEGSSVKATGKIAQIPVSDAYLGRVINALANPIDGRGKISASESRLIESPAPGIISRRSVYEPLQTGLIAIDSMIPIGRGQRELIIGDRQTGKTAVATDTILNQQGQNVICVYVAIGQKASSVAQVVTSLQERGAMEYTIVVAETADSPATLQYLAPYTGAALAEYFMYREQHTLIIYDDLSKQAQAYRQMSLLLRRPPGREAYPGDVFYLHSRLLERAAKLSSQLGEGSMTALPIVETQSGDVSAYIPTNVISITDGQIFLSADLFNSGIRPAINVGISVSRVGSAAQIKAMKQVAGKLKLELAQFAELEAFAQFSSDLDKATQNQLARGQRLRELLKQSQSAPLTVEEQIMTIYTGTNGYLDGLEIGQVRKFLVQLRTYLKTNKPQFQEIIASTKTLTAEAESFLKEGIQEQLERFLLQEK.

Position 170 to 177 (170 to 177) interacts with ATP; the sequence is GDRQTGKT. At Thr257 the chain carries Phosphothreonine.

This sequence belongs to the ATPase alpha/beta chains family. In terms of assembly, F-type ATPases have 2 components, CF(1) - the catalytic core - and CF(0) - the membrane proton channel. CF(1) has five subunits: alpha(3), beta(3), gamma(1), delta(1), epsilon(1). CF(0) has four main subunits: a, b, b' and c.

Its subcellular location is the plastid. It is found in the chloroplast thylakoid membrane. The enzyme catalyses ATP + H2O + 4 H(+)(in) = ADP + phosphate + 5 H(+)(out). In terms of biological role, produces ATP from ADP in the presence of a proton gradient across the membrane. The alpha chain is a regulatory subunit. This Olimarabidopsis pumila (Dwarf rocket) protein is ATP synthase subunit alpha, chloroplastic.